A 158-amino-acid polypeptide reads, in one-letter code: Protein-export protein SecB (158 aa).

It belongs to the SecB family. As to quaternary structure, homotetramer, a dimer of dimers. One homotetramer interacts with 1 SecA dimer.

The protein resides in the cytoplasm. One of the proteins required for the normal export of preproteins out of the cell cytoplasm. It is a molecular chaperone that binds to a subset of precursor proteins, maintaining them in a translocation-competent state. It also specifically binds to its receptor SecA. The protein is Protein-export protein SecB of Yersinia pestis (strain Pestoides F).